The primary structure comprises 408 residues: Peptidase T (408 aa).

H78 provides a ligand contact to Zn(2+). D80 is a catalytic residue. Zn(2+) is bound at residue D141. E175 (proton acceptor) is an active-site residue. Zn(2+)-binding residues include E176, D198, and H380.

This sequence belongs to the peptidase M20B family. Requires Zn(2+) as cofactor.

The protein resides in the cytoplasm. It carries out the reaction Release of the N-terminal residue from a tripeptide.. Cleaves the N-terminal amino acid of tripeptides. This is Peptidase T from Clostridium botulinum (strain Kyoto / Type A2).